Reading from the N-terminus, the 144-residue chain is Deoxyuridine 5'-triphosphate nucleotidohydrolase (144 aa).

Substrate-binding positions include arginine 63–glycine 65, asparagine 76, and threonine 80–aspartate 82.

It belongs to the dUTPase family. Requires Mg(2+) as cofactor.

It carries out the reaction dUTP + H2O = dUMP + diphosphate + H(+). The protein operates within pyrimidine metabolism; dUMP biosynthesis; dUMP from dCTP (dUTP route): step 2/2. This enzyme is involved in nucleotide metabolism: it produces dUMP, the immediate precursor of thymidine nucleotides and it decreases the intracellular concentration of dUTP so that uracil cannot be incorporated into DNA. The protein is Deoxyuridine 5'-triphosphate nucleotidohydrolase of Porphyromonas gingivalis (strain ATCC BAA-308 / W83).